Here is a 133-residue protein sequence, read N- to C-terminus: UPF0102 protein CYA_0680 (133 aa).

It belongs to the UPF0102 family.

The protein is UPF0102 protein CYA_0680 of Synechococcus sp. (strain JA-3-3Ab) (Cyanobacteria bacterium Yellowstone A-Prime).